The sequence spans 552 residues: Glutamine--tRNA ligase (552 aa).

The 'HIGH' region signature appears at 34–44 (PEPNGYLHIGH). ATP contacts are provided by residues 35 to 37 (EPN) and 41 to 47 (HIGHAKS). L-glutamine is bound by residues aspartate 67 and tyrosine 212. Residues threonine 231, 261-262 (RL), and 269-271 (MSK) each bind ATP. Positions 268 to 272 (LMSKR) match the 'KMSKS' region motif.

The protein belongs to the class-I aminoacyl-tRNA synthetase family. Monomer.

Its subcellular location is the cytoplasm. The catalysed reaction is tRNA(Gln) + L-glutamine + ATP = L-glutaminyl-tRNA(Gln) + AMP + diphosphate. In Hamiltonella defensa subsp. Acyrthosiphon pisum (strain 5AT), this protein is Glutamine--tRNA ligase.